The following is a 448-amino-acid chain: tRNA(Ile)-lysidine synthase (448 aa).

Serine 25 to serine 30 contributes to the ATP binding site.

It belongs to the tRNA(Ile)-lysidine synthase family.

It is found in the cytoplasm. The catalysed reaction is cytidine(34) in tRNA(Ile2) + L-lysine + ATP = lysidine(34) in tRNA(Ile2) + AMP + diphosphate + H(+). Functionally, ligates lysine onto the cytidine present at position 34 of the AUA codon-specific tRNA(Ile) that contains the anticodon CAU, in an ATP-dependent manner. Cytidine is converted to lysidine, thus changing the amino acid specificity of the tRNA from methionine to isoleucine. The polypeptide is tRNA(Ile)-lysidine synthase (Brucella abortus (strain S19)).